Consider the following 788-residue polypeptide: Cadherin-10 (788 aa).

A signal peptide spans 1–22 (MTIHQFLLLFLFWVCLPHFCSP). Residues 23-54 (EIMFRRTPVPQQRILSSRVPRSDGKILHRQKR) constitute a propeptide that is removed on maturation. Cadherin domains lie at 55–160 (GWMW…EPTF), 161–269 (PEEI…PPRF), 270–384 (PQNT…PPVF), 385–487 (SRSS…DNAP), and 488–606 (QFAV…LLLP). At 55–613 (GWMWNQFFLL…LLPAGLSTGA (559 aa)) the chain is on the extracellular side. The N-linked (GlcNAc...) asparagine glycan is linked to Asn-256. Asn-438, Asn-456, and Asn-534 each carry an N-linked (GlcNAc...) asparagine glycan. A helical transmembrane segment spans residues 614–634 (LIAILLCIIILLVIVVLFAAL). Over 635 to 788 (KRQRKKEPLI…YGGGESDKDS (154 aa)) the chain is Cytoplasmic. Phosphoserine occurs at positions 784 and 788.

In terms of tissue distribution, predominantly expressed in brain. Also found in adult and fetal kidney. Very low levels detected in prostate and fetal lung.

It localises to the cell membrane. Functionally, cadherins are calcium-dependent cell adhesion proteins. They preferentially interact with themselves in a homophilic manner in connecting cells; cadherins may thus contribute to the sorting of heterogeneous cell types. The protein is Cadherin-10 (CDH10) of Homo sapiens (Human).